The sequence spans 339 residues: Trace amine-associated receptor 2 (339 aa).

Residues 1–36 (MASFEAQQETFDCSEYGNGSCPENERSLGVRAAMYS) lie on the Extracellular side of the membrane. N18 is a glycosylation site (N-linked (GlcNAc...) asparagine). 2 disulfide bridges follow: C21-C185 and C104-C189. Residues 37-57 (LMACAIFITIFGNLAMIISIS) traverse the membrane as a helical segment. At 58–67 (YFKQLHTPTN) the chain is on the cytoplasmic side. The helical transmembrane segment at 68–88 (LLILSMAVTDFLLGFTIMPYS) threads the bilayer. The Extracellular portion of the chain corresponds to 89–106 (MVRSVENCWYFGLTFCKI). The chain crosses the membrane as a helical span at residues 107-127 (HYSFDLMLSITSIFHLCSVAV). The Cytoplasmic segment spans residues 128–150 (DRFYAICHPLHYCTKMTIPVVRR). Residues 151–171 (LLLVCWSVPGAFAFGVVFSEA) form a helical membrane-spanning segment. Residues 172–195 (YADGIEGYDILVACSSSCPVMFNK) are Extracellular-facing. Residues 196–216 (LWGTTLFVAGFFTPSSMMVGI) form a helical membrane-spanning segment. The Cytoplasmic segment spans residues 217 to 251 (YGKIFAVSKKHARVIDNLPENQNNQMRKDKKAAKT). A helical membrane pass occupies residues 252–272 (LGIVMGVFLLCWFPCFFTILL). Residues 273–287 (DPFLNFSTPAVLFDA) are Extracellular-facing. N277 is a glycosylation site (N-linked (GlcNAc...) asparagine). A helical transmembrane segment spans residues 288–310 (LTWFGYFNSTCNPLIYGFFYPWF). The Cytoplasmic portion of the chain corresponds to 311–339 (RRALKYILLGKIFSSHFHNTNLFTQKETE).

It belongs to the G-protein coupled receptor 1 family. As to expression, mainly expressed in neurons of the olfactory epithelium. Also present in the limbic brain areas receiving projection from the olfactory system and several brain regions, including the hippocampus, cerebellum, cortex, raphe nuclei, hypothalamus and habenula.

Its subcellular location is the cell membrane. Its function is as follows. Orphan olfactory receptor specific for trace amines. Trace amine compounds are enriched in animal body fluids and act on trace amine-associated receptors (TAARs) to elicit both intraspecific and interspecific innate behaviors. Ligand-binding causes a conformation change that triggers signaling via the G(s)-class of G-proteins which activate adenylate cyclase. May also be required to provide olfactory input into limbic brain areas to regulate emotional behaviors likely via modulation of the dopamine system. The protein is Trace amine-associated receptor 2 of Mus musculus (Mouse).